The chain runs to 561 residues: Dihydroxy-acid dehydratase 2 (561 aa).

Residue C53 coordinates [2Fe-2S] cluster. Residue D85 coordinates Mg(2+). C126 lines the [2Fe-2S] cluster pocket. D127 and K128 together coordinate Mg(2+). K128 carries the post-translational modification N6-carboxylysine. C195 serves as a coordination point for [2Fe-2S] cluster. E446 serves as a coordination point for Mg(2+). S472 serves as the catalytic Proton acceptor.

Belongs to the IlvD/Edd family. Homodimer. [2Fe-2S] cluster is required as a cofactor. It depends on Mg(2+) as a cofactor.

It carries out the reaction (2R)-2,3-dihydroxy-3-methylbutanoate = 3-methyl-2-oxobutanoate + H2O. It catalyses the reaction (2R,3R)-2,3-dihydroxy-3-methylpentanoate = (S)-3-methyl-2-oxopentanoate + H2O. The protein operates within amino-acid biosynthesis; L-isoleucine biosynthesis; L-isoleucine from 2-oxobutanoate: step 3/4. It participates in amino-acid biosynthesis; L-valine biosynthesis; L-valine from pyruvate: step 3/4. Functionally, functions in the biosynthesis of branched-chain amino acids. Catalyzes the dehydration of (2R,3R)-2,3-dihydroxy-3-methylpentanoate (2,3-dihydroxy-3-methylvalerate) into 2-oxo-3-methylpentanoate (2-oxo-3-methylvalerate) and of (2R)-2,3-dihydroxy-3-methylbutanoate (2,3-dihydroxyisovalerate) into 2-oxo-3-methylbutanoate (2-oxoisovalerate), the penultimate precursor to L-isoleucine and L-valine, respectively. The protein is Dihydroxy-acid dehydratase 2 of Acinetobacter baylyi (strain ATCC 33305 / BD413 / ADP1).